The primary structure comprises 968 residues: uncharacterized protein (968 aa).

Residues 1–27 (MHSWKKKLVVSQLALACTLAITSQANA) form the signal peptide. Residues 703-968 (GLADNGGAWV…SANVGVKYTW (266 aa)) enclose the Autotransporter domain.

This is an uncharacterized protein from Escherichia coli (strain K12).